Here is a 360-residue protein sequence, read N- to C-terminus: DNA replication and repair protein RecF (360 aa).

33 to 40 provides a ligand contact to ATP; it reads GENGSGKT.

The protein belongs to the RecF family.

Its subcellular location is the cytoplasm. In terms of biological role, the RecF protein is involved in DNA metabolism; it is required for DNA replication and normal SOS inducibility. RecF binds preferentially to single-stranded, linear DNA. It also seems to bind ATP. The polypeptide is DNA replication and repair protein RecF (Rickettsia rickettsii (strain Iowa)).